The sequence spans 387 residues: Exodeoxyribonuclease 7 large subunit (387 aa).

The protein belongs to the XseA family. As to quaternary structure, heterooligomer composed of large and small subunits.

It is found in the cytoplasm. The catalysed reaction is Exonucleolytic cleavage in either 5'- to 3'- or 3'- to 5'-direction to yield nucleoside 5'-phosphates.. Functionally, bidirectionally degrades single-stranded DNA into large acid-insoluble oligonucleotides, which are then degraded further into small acid-soluble oligonucleotides. This is Exodeoxyribonuclease 7 large subunit from Parasynechococcus marenigrum (strain WH8102).